Consider the following 239-residue polypeptide: MPLLHRTIIFLQLLGTISSNYNAFFAIMVTNPTVVQQVNQIEVNLTQSNPQFVKFVHNISHLHIKLNTVELNETRLPIVQKFLKELPKAMCNVSYSIPALFEGTAVMANTTLYGKVNPMSSSVISSVHQKIFSLLNNTEIPSVDVHDIFHPRMNIVELDNRKHEDLLQIMSNRTGDFKLNTGDFIKEIVLFNSTESGSFHEEIGRAVLAPCSNFTLLRFKKPELISNRVPIFPLEMDFK.

Positions 1–19 (MPLLHRTIIFLQLLGTISS) are cleaved as a signal peptide. N-linked (GlcNAc...) asparagine glycans are attached at residues asparagine 44, asparagine 58, asparagine 72, asparagine 92, asparagine 109, asparagine 136, asparagine 172, asparagine 192, and asparagine 213.

The protein localises to the secreted. This is an uncharacterized protein from Caenorhabditis elegans.